A 155-amino-acid polypeptide reads, in one-letter code: 17.3 kDa class II heat shock protein (155 aa).

One can recognise a sHSP domain in the interval 39-155; the sequence is DAKAMAATPA…KPKTIEVKVA (117 aa).

Belongs to the small heat shock protein (HSP20) family.

Its subcellular location is the cytoplasm. The sequence is that of 17.3 kDa class II heat shock protein from Solanum peruvianum (Peruvian tomato).